The sequence spans 863 residues: Desmocollin-2 (863 aa).

A propeptide spanning residues 1–89 (KFIGRVNLKE…QEKVLRRAKR (89 aa)) is cleaved from the precursor. 5 Cadherin domains span residues 90-197 (RWAP…APIF), 198-309 (TETS…LPTF), 310-423 (TRSS…GPEC), 424-528 (DPRV…VIPQ), and 529-644 (RTVV…ILGK). The Extracellular portion of the chain corresponds to 90-644 (RWAPIPCSVP…TGNREVILGK (555 aa)). N120 is a glycosylation site (N-linked (GlcNAc...) asparagine). N-linked (GlcNAc...) asparagine glycosylation is found at N346, N495, and N579. The helical transmembrane segment at 645-665 (WAILAILLGIALLFCILFTLV) threads the bilayer. Residues 666–863 (CGATTGADKK…RTLAETCMKR (198 aa)) are Cytoplasmic-facing. A phosphoserine mark is found at S826, S830, and S835.

In terms of assembly, interacts with DSP, PKP2 and JUP. Interacts with DSG3; the interaction may limit the interaction of DSC3 with p38MAPK family members and therefore repress p38MAPK signaling activation. Expressed in esophagus and rumen. Weakly expressed in epithelia and cardiac muscle.

It localises to the cell membrane. Its subcellular location is the cell junction. It is found in the desmosome. In terms of biological role, a component of desmosome cell-cell junctions which are required for positive regulation of cellular adhesion. Promotes timely incorporation of DSG2 into desmosome intercellular junctions and promotes interaction of desmosome cell junctions with intermediate filament cytokeratin, via modulation of DSP phosphorylation. Plays an important role in desmosome-mediated maintenance of intestinal epithelial cell intercellular adhesion strength and barrier function. Positively regulates wound healing of intestinal mucosa via promotion of epithelial cell migration, and also plays a role in mechanotransduction of force between intestinal epithelial cells and extracellular matrix. May contribute to epidermal cell positioning (stratification) by mediating differential adhesiveness between cells that express different isoforms. This chain is Desmocollin-2 (DSC2), found in Bos taurus (Bovine).